Here is a 144-residue protein sequence, read N- to C-terminus: Transcription antitermination protein NusB (144 aa).

Belongs to the NusB family.

In terms of biological role, involved in transcription antitermination. Required for transcription of ribosomal RNA (rRNA) genes. Binds specifically to the boxA antiterminator sequence of the ribosomal RNA (rrn) operons. The polypeptide is Transcription antitermination protein NusB (Haemophilus influenzae (strain 86-028NP)).